Consider the following 89-residue polypeptide: Small ribosomal subunit protein bS20 (89 aa).

The protein belongs to the bacterial ribosomal protein bS20 family.

Binds directly to 16S ribosomal RNA. The chain is Small ribosomal subunit protein bS20 from Sulfurovum sp. (strain NBC37-1).